Reading from the N-terminus, the 297-residue chain is Large ribosomal subunit protein uL18 (297 aa).

Gly-2 is modified (N-acetylglycine). 2 positions are modified to N6-acetyllysine: Lys-5 and Lys-48. At Ser-185 the chain carries Phosphoserine. Lys-220 carries the post-translational modification N6-acetyllysine; alternate. Lys-220 is covalently cross-linked (Glycyl lysine isopeptide (Lys-Gly) (interchain with G-Cter in SUMO1); alternate). Lys-220 is covalently cross-linked (Glycyl lysine isopeptide (Lys-Gly) (interchain with G-Cter in SUMO2); alternate). Position 232 is a phosphothreonine (Thr-232). Residues 253-297 (YEKKPKREVKKKRWNRPKMSLAQKKDRVAQKKASFLRAQERAAES) are disordered. Positions 258–268 (KREVKKKRWNR) are enriched in basic residues. A Phosphoserine modification is found at Ser-272.

The protein belongs to the universal ribosomal protein uL18 family. In terms of assembly, component of the large ribosomal subunit (LSU). Part of the 5S RNP complex, which is a LSU subcomplex composed of the 5S RNA, RPL5 and RPL11. Component of a hexameric 5S RNP precursor complex, composed of 5S RNA, RRS1, RPF2/BXDC1, RPL5, RPL11 and HEATR3; this complex acts as a precursor for ribosome assembly. Interacts with NVL in an ATP-dependent manner. Interacts with RRP1B. Interacts with IPO5, IPO7 and KPNB1; these interactions may be involved in RPL5 nuclear import for the assembly of ribosomal subunits.

It localises to the cytoplasm. It is found in the nucleus. The protein localises to the nucleolus. Component of the ribosome, a large ribonucleoprotein complex responsible for the synthesis of proteins in the cell. The small ribosomal subunit (SSU) binds messenger RNAs (mRNAs) and translates the encoded message by selecting cognate aminoacyl-transfer RNA (tRNA) molecules. The large subunit (LSU) contains the ribosomal catalytic site termed the peptidyl transferase center (PTC), which catalyzes the formation of peptide bonds, thereby polymerizing the amino acids delivered by tRNAs into a polypeptide chain. The nascent polypeptides leave the ribosome through a tunnel in the LSU and interact with protein factors that function in enzymatic processing, targeting, and the membrane insertion of nascent chains at the exit of the ribosomal tunnel. As part of the 5S RNP/5S ribonucleoprotein particle it is an essential component of the LSU, required for its formation and the maturation of rRNAs. It also couples ribosome biogenesis to p53/TP53 activation. As part of the 5S RNP it accumulates in the nucleoplasm and inhibits MDM2, when ribosome biogenesis is perturbed, mediating the stabilization and the activation of TP53. The protein is Large ribosomal subunit protein uL18 (Rpl5) of Mus musculus (Mouse).